Here is a 407-residue protein sequence, read N- to C-terminus: Substance-P receptor (407 aa).

Residues 1 to 31 (MDNVLPVDSDLFPNISTNTSEPNQFVQPAWQ) lie on the Extracellular side of the membrane. N-linked (GlcNAc...) asparagine glycans are attached at residues asparagine 14 and asparagine 18. The helical transmembrane segment at 32-54 (IVLWAAAYTVIVVTSVVGNVVVM) threads the bilayer. The Cytoplasmic portion of the chain corresponds to 55–64 (WIILAHKRMR). The helical transmembrane segment at 65–86 (TVTNYFLVNLAFAEASMAAFNT) threads the bilayer. The Extracellular portion of the chain corresponds to 87-106 (VVNFTYAVHNEWYYGLFYCK). A disulfide bridge connects residues cysteine 105 and cysteine 180. A helical transmembrane segment spans residues 107-128 (FHNFFPIAAVFASIYSMTAVAF). Over 129–148 (DRYMAIIHPLQPRLSATATK) the chain is Cytoplasmic. Residues 149-169 (VVICVIWVLALLLAFPQGYYS) traverse the membrane as a helical segment. The Extracellular segment spans residues 170–194 (TTETMPGRVVCMIEWPSHPDKIYEK). The helical transmembrane segment at 195–219 (VYHICVTVLIYFLPLLVIGYAYTVV) threads the bilayer. Over 220-248 (GITLWASEIPGDSSDRYHEQVSAKRKVVK) the chain is Cytoplasmic. The helical transmembrane segment at 249–270 (MMIVVVCTFAICWLPFHIFFLL) threads the bilayer. The Extracellular portion of the chain corresponds to 271–283 (PYINPDLYLKKFI). A helical transmembrane segment spans residues 284–308 (QQVYLAIMWLAMSSTMYNPIIYCCL). At 309–407 (NDRFRLGFKH…SSSFYSNMLS (99 aa)) the chain is on the cytoplasmic side. Cysteine 322 carries the S-palmitoyl cysteine lipid modification. Residues 363-407 (GAHEEDPEEGPKATPSSLDLTSNGSSRSNSKTVTESSSFYSNMLS) are disordered. Residues 376–407 (TPSSLDLTSNGSSRSNSKTVTESSSFYSNMLS) are compositionally biased toward polar residues.

The protein belongs to the G-protein coupled receptor 1 family. In terms of assembly, interacts with ARRB1.

It is found in the cell membrane. Its function is as follows. This is a receptor for the tachykinin neuropeptide substance P. It is probably associated with G proteins that activate a phosphatidylinositol-calcium second messenger system. The rank order of affinity of this receptor to tachykinins is: substance P &gt; substance K &gt; neuromedin-K. This chain is Substance-P receptor (TACR1), found in Cavia porcellus (Guinea pig).